Here is a 152-residue protein sequence, read N- to C-terminus: Ribosome maturation factor RimP (152 aa).

The protein belongs to the RimP family.

The protein resides in the cytoplasm. Its function is as follows. Required for maturation of 30S ribosomal subunits. This is Ribosome maturation factor RimP from Serratia proteamaculans (strain 568).